Reading from the N-terminus, the 142-residue chain is Extracellular globin-1 (142 aa).

The Globin domain maps to 1-142 (ECLVTEGLKV…DQIIDGIKDI (142 aa)). A disulfide bridge links Cys2 with Cys131. His94 contacts heme b.

The protein belongs to the globin family. The extracellular hemoglobin of the earthworm consists of 12 subunits that have a hexagonal bilayer structure with a molecular weight near 3.8 million. Each one-twelfth subunit is composed primarily of disulfide linked trimers (chains A, B, and C) and monomers (chain D).

This Lumbricus terrestris (Common earthworm) protein is Extracellular globin-1.